Consider the following 333-residue polypeptide: Ribosomal RNA small subunit methyltransferase H (333 aa).

S-adenosyl-L-methionine contacts are provided by residues 31–33, Asp-49, Phe-76, Asp-134, and Gln-141; that span reads GGY.

This sequence belongs to the methyltransferase superfamily. RsmH family.

Its subcellular location is the cytoplasm. The enzyme catalyses cytidine(1402) in 16S rRNA + S-adenosyl-L-methionine = N(4)-methylcytidine(1402) in 16S rRNA + S-adenosyl-L-homocysteine + H(+). Its function is as follows. Specifically methylates the N4 position of cytidine in position 1402 (C1402) of 16S rRNA. This Wolbachia sp. subsp. Brugia malayi (strain TRS) protein is Ribosomal RNA small subunit methyltransferase H.